Here is a 241-residue protein sequence, read N- to C-terminus: Trypsin-10 (241 aa).

Residues 1–13 form the signal peptide; it reads MKSLIFVLLLGAV. A propeptide spans 14-19 (activation peptide); that stretch reads FAEEDK. The region spanning 20-239 is the Peptidase S1 domain; that stretch reads IVGGYECTRH…LSGWVRDTMA (220 aa). Cystine bridges form between Cys-26–Cys-155, Cys-44–Cys-60, Cys-128–Cys-228, Cys-135–Cys-201, Cys-166–Cys-180, and Cys-191–Cys-215. Residues His-59 and Asp-103 each act as charge relay system in the active site. Ser-195 serves as the catalytic Charge relay system.

The protein belongs to the peptidase S1 family.

The protein localises to the secreted. It localises to the extracellular space. The enzyme catalyses Preferential cleavage: Arg-|-Xaa, Lys-|-Xaa.. In Gadus morhua (Atlantic cod), this protein is Trypsin-10.